A 95-amino-acid chain; its full sequence is Large ribosomal subunit protein uL23 (95 aa).

It belongs to the universal ribosomal protein uL23 family. As to quaternary structure, part of the 50S ribosomal subunit. Contacts protein L29, and trigger factor when it is bound to the ribosome.

In terms of biological role, one of the early assembly proteins it binds 23S rRNA. One of the proteins that surrounds the polypeptide exit tunnel on the outside of the ribosome. Forms the main docking site for trigger factor binding to the ribosome. In Bacillus pumilus (strain SAFR-032), this protein is Large ribosomal subunit protein uL23.